Consider the following 468-residue polypeptide: Immunoglobulin superfamily member 21 (468 aa).

A signal peptide spans 1-24 (MRAAPSLRRASCLLLAAILDLARG). Ig-like domains are found at residues 25–132 (YLTV…VVLA) and 344–429 (PKIM…TRLI). The cysteines at positions 46 and 116 are disulfide-linked.

As to quaternary structure, interacts (Ig-like 1 domain) with NRXN2 (via Laminin G-like 1 domain) in a trans-interaction manner. In terms of tissue distribution, expressed in brain.

Its subcellular location is the postsynaptic cell membrane. Its function is as follows. Involved in synaptic inhibition in the brain. Selectively regulates inhibitory presynaptic differentiation through interacting with presynaptic NRXN2. The polypeptide is Immunoglobulin superfamily member 21 (Rattus norvegicus (Rat)).